The chain runs to 882 residues: Protein O-mannosyl-transferase TMTC1 (882 aa).

The Cytoplasmic segment spans residues 1–20 (MVVTTSARGGGGDRTPSRRR). A disordered region spans residues 1–20 (MVVTTSARGGGGDRTPSRRR). Residues 21–41 (GCGLAPAGAAALLAGASCLCY) traverse the membrane as a helical segment. Topologically, residues 42–110 (GRSLQGEFVH…KLNIFLTGMN (69 aa)) are extracellular. Residue Asn86 is glycosylated (N-linked (GlcNAc...) asparagine). A helical membrane pass occupies residues 111–131 (PFYFHAVNIILHCLVTLVLMY). Residues 132 to 137 (TCDKTV) lie on the Cytoplasmic side of the membrane. The helical transmembrane segment at 138–157 (FKNRGLAFVTALLFAVHPIH) threads the bilayer. The Extracellular segment spans residues 158–160 (TEA). Residues 161–181 (VAGIVGRADVLACLLFLLAFL) traverse the membrane as a helical segment. Residues 182-197 (SYNRSLDQGCVGGSFP) lie on the Cytoplasmic side of the membrane. A helical transmembrane segment spans residues 198 to 218 (STVSPFFLLLSLFLGTCAMLV). Residues 219 to 221 (KET) lie on the Extracellular side of the membrane. Residues 222–238 (GITVFGVCLVYDLFSLS) form a helical membrane-spanning segment. Residues 239–313 (NKQDKSSNGA…SPRAVWSMMR (75 aa)) lie on the Cytoplasmic side of the membrane. A disordered region spans residues 246–277 (NGALCPRSPQQPGSPQPSSLPGHPHRENGKQQ). Residues 251–267 (PRSPQQPGSPQPSSLPG) show a composition bias toward low complexity. A helical transmembrane segment spans residues 314 to 334 (FLTYSYLLAFNVWLLLAPVTL). Residues 335-354 (CYDWQVGSIPLVETIWDMRN) are Extracellular-facing. Residues 355 to 375 (LATIFLAVVMALLSLHCLAAF) traverse the membrane as a helical segment. The Cytoplasmic portion of the chain corresponds to 376–381 (KRLEHK). The chain crosses the membrane as a helical span at residues 382–402 (EVLVGLLFLVFPFIPASNLFF). A topological domain (extracellular) is located at residue Arg403. The chain crosses the membrane as a helical span at residues 404 to 424 (VGFVVAERVLYMPSMGYCILF). Topologically, residues 425 to 438 (VHGLSKLCTWLNRC) are cytoplasmic. A helical transmembrane segment spans residues 439–459 (GATTLIVSTVLLLLLFSWKTV). Residues 460-882 (KQNEIWLSRE…LQEVREKDQT (423 aa)) lie on the Extracellular side of the membrane. TPR repeat units lie at residues 483–516 (AKVH…YPRH), 517–547 (ASAL…HPQH), 548–581 (NRAL…GPEF), 582–615 (ADAY…CPDS), 616–649 (SDLH…SPSH), 650–682 (HVAM…VAHK), 683–716 (AEIL…QPSQ), 751–784 (LECY…KPKD), 789–822 (SELF…NPDQ), and 823–856 (AQAW…VPDS).

Belongs to the TMTC family. In terms of assembly, may interact with FAM168B.

The protein localises to the membrane. It localises to the endoplasmic reticulum. It carries out the reaction a di-trans,poly-cis-dolichyl beta-D-mannosyl phosphate + L-seryl-[protein] = 3-O-(alpha-D-mannosyl)-L-seryl-[protein] + a di-trans,poly-cis-dolichyl phosphate + H(+). The catalysed reaction is a di-trans,poly-cis-dolichyl beta-D-mannosyl phosphate + L-threonyl-[protein] = 3-O-(alpha-D-mannosyl)-L-threonyl-[protein] + a di-trans,poly-cis-dolichyl phosphate + H(+). It functions in the pathway protein modification; protein glycosylation. Its function is as follows. Transfers mannosyl residues to the hydroxyl group of serine or threonine residues. The 4 members of the TMTC family are O-mannosyl-transferases dedicated primarily to the cadherin superfamily, each member seems to have a distinct role in decorating the cadherin domains with O-linked mannose glycans at specific regions. Also acts as O-mannosyl-transferase on other proteins such as PDIA3. The sequence is that of Protein O-mannosyl-transferase TMTC1 from Homo sapiens (Human).